A 282-amino-acid chain; its full sequence is NAD kinase (282 aa).

Aspartate 67 acts as the Proton acceptor in catalysis. Residues 67-68 (DG), 140-141 (NE), histidine 151, arginine 170, aspartate 172, and 183-188 (TAYNLS) contribute to the NAD(+) site.

The protein belongs to the NAD kinase family. The cofactor is a divalent metal cation.

It localises to the cytoplasm. The catalysed reaction is NAD(+) + ATP = ADP + NADP(+) + H(+). Its function is as follows. Involved in the regulation of the intracellular balance of NAD and NADP, and is a key enzyme in the biosynthesis of NADP. Catalyzes specifically the phosphorylation on 2'-hydroxyl of the adenosine moiety of NAD to yield NADP. This is NAD kinase from Halobacterium salinarum (strain ATCC 700922 / JCM 11081 / NRC-1) (Halobacterium halobium).